The chain runs to 48 residues: ATP synthase protein 8 (48 aa).

The helical transmembrane segment at 12 to 32 (QLTYGLLLITVLLILFSQFFL) threads the bilayer.

The protein belongs to the ATPase protein 8 family. F-type ATPases have 2 components, CF(1) - the catalytic core - and CF(0) - the membrane proton channel.

It is found in the mitochondrion membrane. In terms of biological role, mitochondrial membrane ATP synthase (F(1)F(0) ATP synthase or Complex V) produces ATP from ADP in the presence of a proton gradient across the membrane which is generated by electron transport complexes of the respiratory chain. F-type ATPases consist of two structural domains, F(1) - containing the extramembraneous catalytic core and F(0) - containing the membrane proton channel, linked together by a central stalk and a peripheral stalk. During catalysis, ATP synthesis in the catalytic domain of F(1) is coupled via a rotary mechanism of the central stalk subunits to proton translocation. Part of the complex F(0) domain. Minor subunit located with subunit a in the membrane. This chain is ATP synthase protein 8 (ATP8), found in Candida glabrata (strain ATCC 2001 / BCRC 20586 / JCM 3761 / NBRC 0622 / NRRL Y-65 / CBS 138) (Yeast).